The primary structure comprises 547 residues: Probable protein kinase UbiB (547 aa).

Positions 121 to 501 constitute a Protein kinase domain; the sequence is EFSPDPMASA…QLRSERRWRR (381 aa). ATP is bound by residues 127–135 and lysine 149; that span reads MASASVAQV. The active-site Proton acceptor is aspartate 284. Transmembrane regions (helical) follow at residues 502–522 and 523–543; these read GFIALVLAGAALVGSQPHAGQ and WLADLPVWSWALLAGAAGVML.

This sequence belongs to the ABC1 family. UbiB subfamily.

Its subcellular location is the cell inner membrane. It functions in the pathway cofactor biosynthesis; ubiquinone biosynthesis [regulation]. In terms of biological role, is probably a protein kinase regulator of UbiI activity which is involved in aerobic coenzyme Q (ubiquinone) biosynthesis. This Marinobacter nauticus (strain ATCC 700491 / DSM 11845 / VT8) (Marinobacter aquaeolei) protein is Probable protein kinase UbiB.